The chain runs to 157 residues: SsrA-binding protein (157 aa).

Residues 133–157 (LHDKRESEKKRDWGREKGRLLRARG) are disordered. A compositionally biased stretch (basic and acidic residues) spans 135–151 (DKRESEKKRDWGREKGR).

It belongs to the SmpB family.

Its subcellular location is the cytoplasm. Required for rescue of stalled ribosomes mediated by trans-translation. Binds to transfer-messenger RNA (tmRNA), required for stable association of tmRNA with ribosomes. tmRNA and SmpB together mimic tRNA shape, replacing the anticodon stem-loop with SmpB. tmRNA is encoded by the ssrA gene; the 2 termini fold to resemble tRNA(Ala) and it encodes a 'tag peptide', a short internal open reading frame. During trans-translation Ala-aminoacylated tmRNA acts like a tRNA, entering the A-site of stalled ribosomes, displacing the stalled mRNA. The ribosome then switches to translate the ORF on the tmRNA; the nascent peptide is terminated with the 'tag peptide' encoded by the tmRNA and targeted for degradation. The ribosome is freed to recommence translation, which seems to be the essential function of trans-translation. The polypeptide is SsrA-binding protein (Bradyrhizobium sp. (strain ORS 278)).